Consider the following 118-residue polypeptide: Transcription factor PAR2 (118 aa).

Positions M1 to V59 are disordered. Over residues S19–N30 the composition is skewed to polar residues. Residues S43–L92 enclose the bHLH domain. The span at T47 to V59 shows a compositional bias: acidic residues.

It belongs to the bHLH protein family. As to quaternary structure, homodimer.

The protein resides in the nucleus. Atypical bHLH transcription factor that acts as a negative regulator of a variety of shade avoidance syndrome (SAS) responses, including seedling elongation and photosynthetic pigment accumulation. Acts as a direct transcriptional repressor of two auxin-responsive genes, SAUR15 and SAUR68. May function in integrating shade and hormone transcriptional networks in response to light and auxin changes. The protein is Transcription factor PAR2 (PAR2) of Arabidopsis thaliana (Mouse-ear cress).